We begin with the raw amino-acid sequence, 355 residues long: Chromosomal protein D1 (355 aa).

Position 1 is an N-acetylmethionine (M1). Positions 1 to 355 are disordered; the sequence is MEEVAVKKRG…NYNDSESVAA (355 aa). Positions 7-14 form a DNA-binding region, a.T hook 1; it reads KKRGRPSK. S30 carries the phosphoserine modification. 2 DNA-binding regions (a.T hook) span residues 34–41 and 60–67; these read KKRGRPAK and KIQNDEDP. Positions 64-77 are enriched in acidic residues; that stretch reads DEDPEDEGEEDGDG. Residues S80, S88, and S89 each carry the phosphoserine modification. A DNA-binding region (a.T hook 4) is located at residues 94–101; sequence KGRGRPKS. A phosphoserine mark is found at S107, S109, and S112. Phosphothreonine is present on T115. Position 118 is a phosphoserine (S118). Positions 119–130 are enriched in basic residues; sequence AKKRKAGRPKKH. The segment at residues 122-129 is a DNA-binding region (a.T hook 5); it reads RKAGRPKK. 2 positions are modified to phosphoserine; by CK2: S133 and S135. Residues 135–147 show a composition bias toward acidic residues; the sequence is SENEDDQDEDDDG. A phosphoserine mark is found at S149, S150, S161, S164, and S170. The segment at residues 155-162 is a DNA-binding region (a.T hook 6); sequence RPVGRPSA. Positions 174-181 form a DNA-binding region, a.T hook 7; it reads RGLGRPKK. S186 bears the Phosphoserine; by CK2 mark. A DNA-binding region (a.T hook 8) is located at residues 196 to 203; sequence KKRGRPPQ. S208 bears the Phosphoserine mark. Positions 219–226 form a DNA-binding region, a.T hook 9; the sequence is RPRGRPKA. Residues 237-247 are compositionally biased toward acidic residues; it reads NDDDQDDENSG. 3 positions are modified to phosphoserine: S246, S252, and S253. 2 consecutive DNA-binding regions (a.T hook) follow at residues 262-269 and 281-288; these read KKRGRPSL and KPRSRPAK. A phosphoserine mark is found at S299 and S307. Positions 307–318 are enriched in basic and acidic residues; that stretch reads SKKESNDEDRAV. At S311 the chain carries Phosphoserine; by CK2. T321 carries the post-translational modification Phosphothreonine. Position 332 is a phosphoserine; by CK2 (S332). Residues 345–355 show a composition bias toward polar residues; sequence DNYNDSESVAA.

It is found in the nucleus. The protein localises to the chromosome. Its function is as follows. This satellite DNA-associated protein is a double-stranded DNA binding protein specific for tracts of pure at DNA. It may play a role in organizing the higher-order structure of euchromatin as well as heterochromatin. This chain is Chromosomal protein D1 (D1), found in Drosophila melanogaster (Fruit fly).